The chain runs to 318 residues: NADH-ubiquinone oxidoreductase chain 1 (318 aa).

8 consecutive transmembrane segments (helical) span residues 2–22 (FMIN…FLTL), 70–90 (MFII…SPLP), 100–120 (LGVL…LWSG), 136–156 (VAQT…VLLM), 172–192 (LWLL…TLAE), 222–242 (LFFL…AILF), 253–273 (ELYT…FLWI), and 294–314 (LPLT…TASI).

The protein belongs to the complex I subunit 1 family. In terms of assembly, core subunit of respiratory chain NADH dehydrogenase (Complex I) which is composed of 45 different subunits.

Its subcellular location is the mitochondrion inner membrane. The enzyme catalyses a ubiquinone + NADH + 5 H(+)(in) = a ubiquinol + NAD(+) + 4 H(+)(out). Core subunit of the mitochondrial membrane respiratory chain NADH dehydrogenase (Complex I) which catalyzes electron transfer from NADH through the respiratory chain, using ubiquinone as an electron acceptor. Essential for the catalytic activity and assembly of complex I. The polypeptide is NADH-ubiquinone oxidoreductase chain 1 (MT-ND1) (Balaenoptera musculus (Blue whale)).